The following is a 255-amino-acid chain: NAD kinase (255 aa).

Residue Asp44 is the Proton acceptor of the active site. NAD(+) contacts are provided by residues 44–45 (DG), His49, 114–115 (NE), Asp144, Ala152, 155–160 (SAYNLS), and Gln216.

It belongs to the NAD kinase family. A divalent metal cation is required as a cofactor.

It localises to the cytoplasm. It carries out the reaction NAD(+) + ATP = ADP + NADP(+) + H(+). Involved in the regulation of the intracellular balance of NAD and NADP, and is a key enzyme in the biosynthesis of NADP. Catalyzes specifically the phosphorylation on 2'-hydroxyl of the adenosine moiety of NAD to yield NADP. In Rickettsia canadensis (strain McKiel), this protein is NAD kinase.